Consider the following 601-residue polypeptide: Deuterosome assembly protein 1 (601 aa).

3 coiled-coil regions span residues 14–59, 86–196, and 226–277; these read CEAE…NAQT, TQNY…GKKQ, and IEKL…ELQS. The segment at 305–329 is disordered; it reads AQDNRKRVESSYSPSPKEAERKRKE. A coiled-coil region spans residues 354–397; that stretch reads EEGLCSEQERLRSEISELTQELHQKEVTIATVMKKAALLERQLK. A Phosphoserine modification is found at Ser-544. Residues 555–586 are a coiled coil; it reads AAQHFLMEEERRAKELEKLLNTHIDELQRHTE.

Belongs to the CEP63 family. As to quaternary structure, interacts with CEP152; the interaction is mutually exclusive with CEP63. In terms of tissue distribution, highly enriched in multicilia-abundant tissues (trachea and oviduct).

The protein localises to the cytoplasm. In terms of biological role, key structural component of the deuterosome, a structure that promotes de novo centriole amplification in multiciliated cells. Deuterosome-mediated centriole amplification occurs in terminally differentiated multiciliated cells and can generate more than 100 centrioles. Probably sufficient for the specification and formation of the deuterosome inner core. Interacts with CEP152 and recruits PLK4 to activate centriole biogenesis. This chain is Deuterosome assembly protein 1, found in Mus musculus (Mouse).